The following is a 909-amino-acid chain: Protein NLP1 (909 aa).

Disordered regions lie at residues 51-71, 536-556, 568-605, and 690-745; these read KSLKQTEQSPSASTAMNDNSP, KEDPKELSSGRENSQLDPVPN, ASTPGLRVDIGPSTESASTGGGNMLSSRRPGEKKRAKT, and NSPN…ENTG. Positions 55–70 are enriched in polar residues; that stretch reads QTEQSPSASTAMNDNS. The 82-residue stretch at 595–676 folds into the RWP-RK domain; sequence RRPGEKKRAK…MDSVQGAQGS (82 aa). Positions 690–716 are enriched in polar residues; sequence NSPNMSSNGPSLKSNEQPSHLNAQTDN. The span at 725-745 shows a compositional bias: low complexity; that stretch reads RSPSSSCSKSSGSSNNNENTG. The PB1 domain maps to 811-894; that stretch reads AIKVKATFGE…HTIKISLNEA (84 aa).

It is found in the nucleus. Its function is as follows. Probable transcription factor. This Arabidopsis thaliana (Mouse-ear cress) protein is Protein NLP1 (NLP1).